An 83-amino-acid chain; its full sequence is Beta-toxin Ct7 (83 aa).

The first 18 residues, 1-18 (MKVLILIIASVLLIGVEC), serve as a signal peptide directing secretion. The LCN-type CS-alpha/beta domain occupies 19–81 (KDGYPMNSEG…VWDSATNKCG (63 aa)). Disulfide bonds link cysteine 29–cysteine 80, cysteine 33–cysteine 54, cysteine 40–cysteine 61, and cysteine 44–cysteine 63. Glycine 81 bears the Glycine amide mark. Residue glycine 82 is a propeptide.

The protein belongs to the long (4 C-C) scorpion toxin superfamily. Sodium channel inhibitor family. Beta subfamily. In terms of tissue distribution, expressed by the venom gland.

It localises to the secreted. Beta toxins bind voltage-independently at site-4 of sodium channels (Nav) and shift the voltage of activation toward more negative potentials thereby affecting sodium channel activation and promoting spontaneous and repetitive firing. Is possibly toxic to mice, freshwater shrimp and crickets. The chain is Beta-toxin Ct7 from Centruroides tecomanus (Scorpion).